A 130-amino-acid polypeptide reads, in one-letter code: MAENQYYGTGRRKSSAARVFIKPGNGKIVINQRSLEQYFGRETARMVVRQPLELVDMVEKLDLYITVKGGGISGQAGAIRHGITRALMEYDESLRGELRKAGFVTRDARQVERKKVGLRKARRRPQFSKR.

This sequence belongs to the universal ribosomal protein uS9 family.

The polypeptide is Small ribosomal subunit protein uS9 (Salmonella paratyphi A (strain AKU_12601)).